The following is a 177-amino-acid chain: uncharacterized protein (177 aa).

Its subcellular location is the plastid. It localises to the chloroplast. This is an uncharacterized protein from Chlorella vulgaris (Green alga).